Consider the following 407-residue polypeptide: Phosphonoacetate hydrolase (407 aa).

Zn(2+) contacts are provided by Asp-25, Thr-64, Asp-202, His-206, Asp-241, His-242, and His-368. Thr-64 and Asp-202 together coordinate substrate. Positions 242 and 368 each coordinate substrate.

The protein belongs to the alkaline phosphatase family. PhnA subfamily. In terms of assembly, homodimer. The cofactor is Zn(2+).

The enzyme catalyses phosphonoacetate + H2O = acetate + phosphate + H(+). Its activity is regulated as follows. Completely inhibited by EDTA and 1,10-phenanthroline. Moderately inhibited by the phosphonocarboxylic acids phosphonoformate and 3-phosphonopropionate and the phosphonate herbicide glyphosate. Partially inhibited by the reducing agents sodium sulfide and dithiotheitol and the chelating agent iminodiacetate. Nonphosphonate analogs of phosphonoacetate, such as arsonoacetate, sulfonoacetate and malonate are poor inhibitors. Inorganic phosphate, acetate and the known phosphonotase inhibitor phosphite have little effect on activity. Not inhibited by the alkylphosphonic acids methylphosphonate and ethylphosphonate, or the aminoalkylphosphonates 2-aminoethylphosphonate, 3-aminopropylphosphonate and 4-aminobutylphosphonate. Fe(3+), Ca(2+), Mg(2+) and Cs(+) have no effect on activity. Activity is slightly increased by the aminoalkylphosphonates 1-aminoethylphosphonate, 1-aminobutylphosphonate, 2-amino-4-butylphosphonate. Activity is increased by Zn(2+), Mn(2+) and Co(2+), these 3 metal ions also allow recovery of activity after EDTA treatment. Functionally, specifically hydrolyzes phosphonoacetate. Does not have activity on other organophosphonates or acetates. In Pseudomonas fluorescens, this protein is Phosphonoacetate hydrolase.